The chain runs to 598 residues: Chaperone protein DnaK (598 aa).

At Thr175 the chain carries Phosphothreonine; by autocatalysis. Residues 571 to 591 (AKSAAASSNKDDSLNNNSSSN) show a composition bias toward low complexity. A disordered region spans residues 571 to 598 (AKSAAASSNKDDSLNNNSSSNNDEETFE).

It belongs to the heat shock protein 70 family.

Its function is as follows. Acts as a chaperone. In Mycoplasmopsis agalactiae (strain NCTC 10123 / CIP 59.7 / PG2) (Mycoplasma agalactiae), this protein is Chaperone protein DnaK.